The sequence spans 188 residues: Protein SSX3 (188 aa).

The region spanning 20–83 (KIQKAFDDIA…KRVTDFQGND (64 aa)) is the KRAB-related domain. The interval 113–162 (PKKPAEEGNVSKEVPEASGPQNDGKQLCPPGKPTTSEKINMISGPKRGEH) is disordered. The segment covering 115 to 127 (KPAEEGNVSKEVP) has biased composition (basic and acidic residues). A Phosphoserine modification is found at Ser123.

The protein belongs to the SSX family. Interacts with SSX2IP.

In terms of biological role, could act as a modulator of transcription. The polypeptide is Protein SSX3 (SSX3) (Homo sapiens (Human)).